A 4262-amino-acid chain; its full sequence is Polyketide synthase PksM (4262 aa).

The segment at Met1–Ala114 is N-terminal hotdog fold 1. Residues Met1–Phe271 enclose the PKS/mFAS DH 1 domain. The Proton acceptor; for dehydratase activity 1 role is filled by His18. The C-terminal hotdog fold 1 stretch occupies residues Asp129–Phe271. The active-site Proton donor; for dehydratase activity 1 is Asp190. The region spanning Pro293–Tyr367 is the Carrier 1 domain. Position 327 is an O-(pantetheine 4'-phosphoryl)serine (Ser327). The Ketosynthase family 3 (KS3) 1 domain maps to Gly393–Glu831. Residues Cys569, His704, and His744 each act as for beta-ketoacyl synthase 1 activity in the active site. The tract at residues His1009–Glu1135 is N-terminal hotdog fold 2. The PKS/mFAS DH 2 domain occupies His1009–Ser1301. Residue His1038 is the Proton acceptor; for dehydratase activity 2 of the active site. Residues Ser1149–Ser1301 are C-terminal hotdog fold 2. The Proton donor; for dehydratase activity 2 role is filled by Asp1211. The region spanning Glu2188–Lys2261 is the Carrier 2 domain. An O-(pantetheine 4'-phosphoryl)serine modification is found at Ser2222. Over residues Val2275–Pro2291 the composition is skewed to polar residues. A disordered region spans residues Val2275–Pro2313. Positions Ser2319 to Glu2734 constitute a Ketosynthase family 3 (KS3) 2 domain. Active-site for beta-ketoacyl synthase 2 activity residues include Cys2476, His2611, and His2651. The stretch at Ala2750–Leu2826 forms a coiled coil. Positions Ser3409–His3486 constitute a Carrier 3 domain. Ser3446 carries the post-translational modification O-(pantetheine 4'-phosphoryl)serine. The 416-residue stretch at Asp3529–Glu3944 folds into the Ketosynthase family 3 (KS3) 3 domain. Catalysis depends on for beta-ketoacyl synthase 3 activity residues Cys3690, His3825, and His3865. Positions Lys4004–Asn4033 form a coiled coil. A Carrier 4 domain is found at Asn4135–Ala4212. The residue at position 4172 (Ser4172) is an O-(pantetheine 4'-phosphoryl)serine.

Requires pantetheine 4'-phosphate as cofactor.

The protein resides in the cytoplasm. The protein operates within antibiotic biosynthesis; bacillaene biosynthesis. Its function is as follows. Involved in some intermediate steps for the synthesis of the antibiotic polyketide bacillaene which is involved in secondary metabolism. In Bacillus subtilis (strain 168), this protein is Polyketide synthase PksM (pksM).